Consider the following 300-residue polypeptide: L-threonine kinase (300 aa).

Residue 92–102 (PVAKGMASSTA) participates in ATP binding.

The protein belongs to the GHMP kinase family. PduX subfamily.

Its subcellular location is the cytoplasm. It carries out the reaction L-threonine + ATP = O-phospho-L-threonine + ADP + H(+). The protein operates within cofactor biosynthesis; adenosylcobalamin biosynthesis. Its pathway is polyol metabolism; 1,2-propanediol degradation. In terms of biological role, L-threonine kinase that catalyzes the conversion of L-threonine to L-threonine-O-3-phosphate. Involved in the de novo synthesis of adenosylcobalamin (coenzyme B12) and the assimilation of cobyric acid. Uses ATP; the activity with CTP, GTP or UTP is 6, 11, and 3% of the activity with ATP, respectively. Its function is as follows. The 1,2-propanediol (1,2-PD)-specific bacterial microcompartment (BMC) concentrates low levels of 1,2-PD catabolic enzymes, concentrates volatile reaction intermediates thus enhancing pathway flux and keeps the level of toxic, mutagenic propionaldehyde low. This gene probably benefits from its induction via the Pdu promoter, rather than a physical interaction with the BMC. The polypeptide is L-threonine kinase (Salmonella typhimurium (strain LT2 / SGSC1412 / ATCC 700720)).